The sequence spans 552 residues: HTH-type transcriptional regulator SgrR (552 aa).

The segment at 163–493 (ELKPDLAHHW…DDLDTDAQQW (331 aa)) is solute-binding.

Its function is as follows. Activates the small RNA gene sgrS under glucose-phosphate stress conditions as well as yfdZ. Represses its own transcription under both stress and non-stress conditions. Might act as a sensor of the intracellular accumulation of phosphoglucose by binding these molecules in its C-terminal solute-binding domain. In Pectobacterium atrosepticum (strain SCRI 1043 / ATCC BAA-672) (Erwinia carotovora subsp. atroseptica), this protein is HTH-type transcriptional regulator SgrR.